The sequence spans 159 residues: Probable inactive acireductone dioxygenase 2 (159 aa).

Belongs to the acireductone dioxygenase (ARD) family.

It localises to the cytoplasm. The protein resides in the nucleus. Probable inactive acireductone dioxygenase. The protein is Probable inactive acireductone dioxygenase 2 of Caenorhabditis briggsae.